The chain runs to 355 residues: Isopentenyl-diphosphate delta-isomerase (355 aa).

12-13 is a binding site for substrate; sequence RK. Residues Ser70, 71 to 73, Ser101, and Asn130 each bind FMN; that span reads SMT. 101–103 lines the substrate pocket; sequence SMR. Gln165 is a binding site for substrate. Glu166 serves as a coordination point for Mg(2+). FMN contacts are provided by residues Lys197 and 308–309; that span reads AG.

This sequence belongs to the IPP isomerase type 2 family. Homooctamer. Dimer of tetramers. Requires FMN as cofactor. It depends on NADPH as a cofactor. Mg(2+) serves as cofactor.

It localises to the cytoplasm. It catalyses the reaction isopentenyl diphosphate = dimethylallyl diphosphate. Functionally, involved in the biosynthesis of isoprenoids. Catalyzes the 1,3-allylic rearrangement of the homoallylic substrate isopentenyl (IPP) to its allylic isomer, dimethylallyl diphosphate (DMAPP). The polypeptide is Isopentenyl-diphosphate delta-isomerase (Chlorobium phaeovibrioides (strain DSM 265 / 1930) (Prosthecochloris vibrioformis (strain DSM 265))).